The following is a 132-amino-acid chain: Fertilization-influencing membrane protein (132 aa).

The helical transmembrane segment at 100 to 120 (PGLFHHILVGLLVVAFFFLLF) threads the bilayer.

In terms of tissue distribution, testis-specific.

It localises to the cell membrane. Functionally, may play a role in sperm-oocyte fusion during fertilization. The protein is Fertilization-influencing membrane protein of Homo sapiens (Human).